The primary structure comprises 323 residues: Transaldolase (323 aa).

Lysine 131 (schiff-base intermediate with substrate) is an active-site residue.

The protein belongs to the transaldolase family. Type 1 subfamily. Homodimer.

It is found in the cytoplasm. The catalysed reaction is D-sedoheptulose 7-phosphate + D-glyceraldehyde 3-phosphate = D-erythrose 4-phosphate + beta-D-fructose 6-phosphate. It functions in the pathway carbohydrate degradation; pentose phosphate pathway; D-glyceraldehyde 3-phosphate and beta-D-fructose 6-phosphate from D-ribose 5-phosphate and D-xylulose 5-phosphate (non-oxidative stage): step 2/3. Functionally, transaldolase is important for the balance of metabolites in the pentose-phosphate pathway. In Blochmanniella floridana, this protein is Transaldolase.